A 245-amino-acid chain; its full sequence is MYRYKITIEYLGTDLAGWQRQAGVMSVQQILEEAIYKFSGEQVILFGAGRTDAGVHAVGQVAHFDLSKYLEPHKIITAINYFVRPYAVGVWNCELAPNNFHARFSATSRYYIYRIINRPYPSVIDLNRAWWISSPLDVPAMQQAAAYLLGKHDFTSFRASSCQSKSPIKTLTELNIIKEDEEIKLYLSAPSFLHHMVRNIVGSLVLVGKNIWQAEQIKDVLEAKDRKAAGPTAPASGLYFVKAAY.

Asp52 functions as the Nucleophile in the catalytic mechanism. Tyr111 provides a ligand contact to substrate.

Belongs to the tRNA pseudouridine synthase TruA family. In terms of assembly, homodimer.

It catalyses the reaction uridine(38/39/40) in tRNA = pseudouridine(38/39/40) in tRNA. Formation of pseudouridine at positions 38, 39 and 40 in the anticodon stem and loop of transfer RNAs. This chain is tRNA pseudouridine synthase A, found in Rickettsia rickettsii (strain Iowa).